The primary structure comprises 424 residues: Enolase (424 aa).

Gln-162 contributes to the (2R)-2-phosphoglycerate binding site. Glu-204 (proton donor) is an active-site residue. Mg(2+) contacts are provided by Asp-241, Glu-284, and Asp-311. Lys-336, Arg-365, Ser-366, and Lys-387 together coordinate (2R)-2-phosphoglycerate. Lys-336 (proton acceptor) is an active-site residue.

The protein belongs to the enolase family. The cofactor is Mg(2+).

Its subcellular location is the cytoplasm. It localises to the secreted. The protein resides in the cell surface. It catalyses the reaction (2R)-2-phosphoglycerate = phosphoenolpyruvate + H2O. It functions in the pathway carbohydrate degradation; glycolysis; pyruvate from D-glyceraldehyde 3-phosphate: step 4/5. Its function is as follows. Catalyzes the reversible conversion of 2-phosphoglycerate (2-PG) into phosphoenolpyruvate (PEP). It is essential for the degradation of carbohydrates via glycolysis. The chain is Enolase from Rhizobium meliloti (strain 1021) (Ensifer meliloti).